The chain runs to 779 residues: Probable ATP-dependent RNA helicase DHX40 (779 aa).

Positions 1–53 are disordered; that stretch reads MSRFPAVAGRAPRRQEEGERPVELQEERPSAVRIADREEKGCTSQEGGTTPTF. Over residues 13-41 the composition is skewed to basic and acidic residues; that stretch reads RRQEEGERPVELQEERPSAVRIADREEKG. Residues 42 to 53 show a composition bias toward polar residues; the sequence is CTSQEGGTTPTF. Residues 63–231 enclose the Helicase ATP-binding domain; the sequence is IQAVRDNSFL…FGNCPIFDIP (169 aa). 76 to 83 contacts ATP; sequence GNTGSGKT. A DEAH box motif is present at residues 173-176; that stretch reads DEAH. The Helicase C-terminal domain maps to 263-442; the sequence is TMDIHLNEMA…SVVLTLKCLA (180 aa).

It belongs to the DEAD box helicase family. DEAH subfamily.

It carries out the reaction ATP + H2O = ADP + phosphate + H(+). Functionally, probable ATP-dependent RNA helicase. This Rattus norvegicus (Rat) protein is Probable ATP-dependent RNA helicase DHX40 (Dhx40).